Consider the following 264-residue polypeptide: Acyl-[acyl-carrier-protein]--UDP-N-acetylglucosamine O-acyltransferase (264 aa).

The protein belongs to the transferase hexapeptide repeat family. LpxA subfamily. Homotrimer.

It localises to the cytoplasm. The enzyme catalyses a (3R)-hydroxyacyl-[ACP] + UDP-N-acetyl-alpha-D-glucosamine = a UDP-3-O-[(3R)-3-hydroxyacyl]-N-acetyl-alpha-D-glucosamine + holo-[ACP]. It participates in glycolipid biosynthesis; lipid IV(A) biosynthesis; lipid IV(A) from (3R)-3-hydroxytetradecanoyl-[acyl-carrier-protein] and UDP-N-acetyl-alpha-D-glucosamine: step 1/6. Its function is as follows. Involved in the biosynthesis of lipid A, a phosphorylated glycolipid that anchors the lipopolysaccharide to the outer membrane of the cell. The chain is Acyl-[acyl-carrier-protein]--UDP-N-acetylglucosamine O-acyltransferase from Haemophilus ducreyi (strain 35000HP / ATCC 700724).